The primary structure comprises 29 residues: Glucagon (29 aa).

At Ser2 the chain carries Phosphoserine.

The protein belongs to the glucagon family.

The protein resides in the secreted. Glucagon plays a key role in glucose metabolism and homeostasis. Regulates blood glucose by increasing gluconeogenesis and decreasing glycolysis. This is Glucagon (GCG) from Chinchilla chinchilla (Short-tailed chinchilla).